We begin with the raw amino-acid sequence, 976 residues long: Chitin synthase 3A (976 aa).

The disordered stretch occupies residues 29–72 (DDANASNRSPVSNPYEPDYDQLSPPPMLGAQRPVPEQNESSRDL). The span at 31–40 (ANASNRSPVS) shows a compositional bias: polar residues. N-linked (GlcNAc...) asparagine glycans are attached at residues Asn-32, Asn-66, Asn-95, and Asn-602. The next 7 membrane-spanning stretches (helical) occupy residues 639-659 (LLNV…TTII), 684-704 (IVNV…FVLA), 717-737 (VLSF…TGYL), 773-793 (LIII…FLYL), 801-821 (SFPQ…VYAF), 903-923 (TGLV…VTTD), and 944-964 (FLLY…LWFI).

Belongs to the chitin synthase family. Class III subfamily.

The protein resides in the cell membrane. It carries out the reaction [(1-&gt;4)-N-acetyl-beta-D-glucosaminyl](n) + UDP-N-acetyl-alpha-D-glucosamine = [(1-&gt;4)-N-acetyl-beta-D-glucosaminyl](n+1) + UDP + H(+). Functionally, polymerizes chitin, a structural polymer of the cell wall and septum, by transferring the sugar moiety of UDP-GlcNAc to the non-reducing end of the growing chitin polymer. Shows additive effects in septum formation with CHS1, CHS2, CHS4, CHS5, CHS6 and CHS7. Involved in virulence and mediates mycotoxin deoxinivalenol (DON) biosynthesis via the regulation of the expression of TRI4, TRI5 and TRI6. This is Chitin synthase 3A from Gibberella zeae (strain ATCC MYA-4620 / CBS 123657 / FGSC 9075 / NRRL 31084 / PH-1) (Wheat head blight fungus).